The sequence spans 528 residues: GMP synthase [glutamine-hydrolyzing] (528 aa).

Positions 3–199 (KVAIIDFGSQ…FLDIAGCQKD (197 aa)) constitute a Glutamine amidotransferase type-1 domain. Cys83 functions as the Nucleophile in the catalytic mechanism. Catalysis depends on residues His174 and Glu176. One can recognise a GMPS ATP-PPase domain in the interval 200-394 (WTVTSFIDDQ…LGISTEILMR (195 aa)). 227–233 (SGGVDSS) is an ATP binding site.

Homodimer.

It catalyses the reaction XMP + L-glutamine + ATP + H2O = GMP + L-glutamate + AMP + diphosphate + 2 H(+). The protein operates within purine metabolism; GMP biosynthesis; GMP from XMP (L-Gln route): step 1/1. In terms of biological role, catalyzes the synthesis of GMP from XMP. In Ehrlichia ruminantium (strain Gardel), this protein is GMP synthase [glutamine-hydrolyzing].